Reading from the N-terminus, the 527-residue chain is Sensory neuron membrane protein 1 (527 aa).

The Cytoplasmic segment spans residues 1–10 (MQLQKPLKIG). Residues 11 to 31 (LGMMGAGLFGIIFGWVLFPVI) traverse the membrane as a helical segment. Over 32 to 456 (LKSQLKKEMA…LKNQLFIPKR (425 aa)) the chain is Extracellular. N-linked (GlcNAc...) asparagine glycans are attached at residues asparagine 67 and asparagine 229. 3 disulfides stabilise this stretch: cysteine 268/cysteine 333, cysteine 297/cysteine 352, and cysteine 335/cysteine 341. The N-linked (GlcNAc...) asparagine glycan is linked to asparagine 440. The helical transmembrane segment at 457-477 (IVSVVKWLLAGVGFVGLVGSL) threads the bilayer. Over 478–527 (VYQFKGKMINFALSPSSAQVTKVNPEINQQNQPKDISIIGESQNPPKVDM) the chain is Cytoplasmic.

It belongs to the CD36 family. Detected in both male and female antennal tissues. Expression is two to three fold higher in male compared to female antenna.

It is found in the cell membrane. Its function is as follows. Plays an olfactory role that is not restricted to pheromone sensitivity. The protein is Sensory neuron membrane protein 1 of Ostrinia furnacalis (Asian corn borer).